The chain runs to 271 residues: Purine nucleoside phosphorylase 1 (271 aa).

Residues Ser28, His59, 79–81 (RFH), and Ala111 each bind phosphate. Ser28 bears the Phosphoserine mark. Glu191 is a binding site for a purine D-ribonucleoside. Ser210 serves as a coordination point for phosphate. Asn233 contacts a purine D-ribonucleoside.

Belongs to the PNP/MTAP phosphorylase family. As to quaternary structure, homotrimer.

It catalyses the reaction a purine 2'-deoxy-D-ribonucleoside + phosphate = a purine nucleobase + 2-deoxy-alpha-D-ribose 1-phosphate. It functions in the pathway purine metabolism; purine nucleoside salvage. Its function is as follows. The purine nucleoside phosphorylases catalyze the phosphorolytic breakdown of the N-glycosidic bond in the beta-(deoxy)ribonucleoside molecules, with the formation of the corresponding free purine bases and pentose-1-phosphate. Cleaves guanosine, inosine, 2'-deoxyguanosine and 2'-deoxyinosine. This is Purine nucleoside phosphorylase 1 (punA) from Bacillus subtilis (strain 168).